A 137-amino-acid polypeptide reads, in one-letter code: NADH-ubiquinone oxidoreductase chain 3 (137 aa).

Transmembrane regions (helical) follow at residues 6–26 (LFIL…LIFA), 57–77 (FFIF…TFPF), and 86–106 (IYGL…FVYE).

The protein belongs to the complex I subunit 3 family.

Its subcellular location is the mitochondrion membrane. It catalyses the reaction a ubiquinone + NADH + 5 H(+)(in) = a ubiquinol + NAD(+) + 4 H(+)(out). Functionally, core subunit of the mitochondrial membrane respiratory chain NADH dehydrogenase (Complex I) that is believed to belong to the minimal assembly required for catalysis. Complex I functions in the transfer of electrons from NADH to the respiratory chain. The immediate electron acceptor for the enzyme is believed to be ubiquinone. The protein is NADH-ubiquinone oxidoreductase chain 3 (ND3) of Podospora anserina (strain S / ATCC MYA-4624 / DSM 980 / FGSC 10383) (Pleurage anserina).